We begin with the raw amino-acid sequence, 977 residues long: Receptor protein-tyrosine kinase CEPR2 (977 aa).

Positions methionine 1–serine 31 are cleaved as a signal peptide. Topologically, residues threonine 32 to glycine 620 are extracellular. A glycan (N-linked (GlcNAc...) asparagine) is linked at asparagine 85. 20 LRR repeats span residues leucine 97–cysteine 121, lysine 122–serine 146, glutamate 148–asparagine 167, methionine 168–glycine 192, leucine 193–leucine 217, alanine 219–leucine 241, valine 242–leucine 265, threonine 266–valine 288, lysine 290–aspartate 312, leucine 313–serine 338, leucine 340–asparagine 361, lysine 363–cysteine 385, lysine 386–leucine 409, leucine 411–serine 433, threonine 434–leucine 457, threonine 458–leucine 481, lysine 482–asparagine 504, valine 506–isoleucine 529, alanine 530–leucine 553, and leucine 555–valine 576. N-linked (GlcNAc...) asparagine glycosylation is present at asparagine 128. A glycan (N-linked (GlcNAc...) asparagine) is linked at asparagine 205. Residues asparagine 243, asparagine 251, and asparagine 264 are each glycosylated (N-linked (GlcNAc...) asparagine). N-linked (GlcNAc...) asparagine glycans are attached at residues asparagine 301 and asparagine 325. N-linked (GlcNAc...) asparagine glycans are attached at residues asparagine 469 and asparagine 491. An N-linked (GlcNAc...) asparagine glycan is attached at asparagine 615. The chain crosses the membrane as a helical span at residues threonine 621–leucine 641. Residues arginine 642 to valine 977 are Cytoplasmic-facing. Residues leucine 683–valine 965 form the Protein kinase domain. Residues isoleucine 689–valine 697 and lysine 712 contribute to the ATP site. At tyrosine 801 the chain carries Phosphotyrosine. Aspartate 814 serves as the catalytic Proton acceptor. Serine 846 is modified (phosphoserine). A phosphotyrosine mark is found at tyrosine 854 and tyrosine 861.

It belongs to the protein kinase superfamily. Ser/Thr protein kinase family. In terms of assembly, interacts with the root-derived peptide CEP1. Binds to the ammonium transporter AMT1-1. As to expression, expressed in mature leaves, primary roots, and the root tips of both primary and lateral roots.

It localises to the cell membrane. It carries out the reaction L-tyrosyl-[protein] + ATP = O-phospho-L-tyrosyl-[protein] + ADP + H(+). Functionally, receptor kinase involved in the perception of C-terminally encoded plant signaling peptide (CEP) and subsequent regulation of root and shoot development. Together with CEPR1, mediates systemic nitrogen (N)-demand signaling upon the perception of root-derived peptides (e.g. CEP1) via the up-regulation of genes involved in N uptake and assimilation pathways. The sequence is that of Receptor protein-tyrosine kinase CEPR2 from Arabidopsis thaliana (Mouse-ear cress).